Reading from the N-terminus, the 489-residue chain is Cysteine--tRNA ligase (489 aa).

Position 27 (Cys-27) interacts with Zn(2+). The short motif at 29–39 (VTVYDLCHLGH) is the 'HIGH' region element. Residues Cys-211, His-236, and Glu-240 each coordinate Zn(2+). Positions 268-272 (KMSKS) match the 'KMSKS' region motif. Lys-271 lines the ATP pocket.

It belongs to the class-I aminoacyl-tRNA synthetase family. Monomer. The cofactor is Zn(2+).

Its subcellular location is the cytoplasm. It carries out the reaction tRNA(Cys) + L-cysteine + ATP = L-cysteinyl-tRNA(Cys) + AMP + diphosphate. This is Cysteine--tRNA ligase from Prochlorococcus marinus (strain MIT 9215).